The sequence spans 570 residues: MNMSLLQTPSLLMYNKMLKSLADGKSFTKVLALFGELRGQGLYPDNFTLPVVLKSIGRLRKVIEGEKVHGYAVKAGLEFDSYVSNSLMGMYASLGKIEITHKVFDEMPQRDVVSWNGLISSYVGNGRFEDAIGVFKRMSQESNLKFDEGTIVSTLSACSALKNLEIGERIYRFVVTEFEMSVRIGNALVDMFCKCGCLDKARAVFDSMRDKNVKCWTSMVFGYVSTGRIDEARVLFERSPVKDVVLWTAMMNGYVQFNRFDEALELFRCMQTAGIRPDNFVLVSLLTGCAQTGALEQGKWIHGYINENRVTVDKVVGTALVDMYAKCGCIETALEVFYEIKERDTASWTSLIYGLAMNGMSGRALDLYYEMENVGVRLDAITFVAVLTACNHGGFVAEGRKIFHSMTERHNVQPKSEHCSCLIDLLCRAGLLDEAEELIDKMRGESDETLVPVYCSLLSAARNYGNVKIAERVAEKLEKVEVSDSSAHTLLASVYASANRWEDVTNVRRKMKDLGIRKFPGCSSIEIDGVGHEFIVGDDLLSHPKMDEINSMLHQTTNLMLDLEHKEIDS.

PPR repeat units lie at residues 10 to 44, 45 to 79, 80 to 110, 111 to 141, 147 to 177, 181 to 215, 216 to 242, 243 to 277, 278 to 312, 313 to 343, 344 to 378, 379 to 414, and 415 to 449; these read SLLMYNKMLKSLADGKSFTKVLALFGELRGQGLYP, DNFTLPVVLKSIGRLRKVIEGEKVHGYAVKAGLEF, DSYVSNSLMGMYASLGKIEITHKVFDEMPQR, DVVSWNGLISSYVGNGRFEDAIGVFKRMSQE, DEGTIVSTLSACSALKNLEIGERIYRFVVTE, SVRIGNALVDMFCKCGCLDKARAVFDSMRDKNVKC, WTSMVFGYVSTGRIDEARVLFERSPVK, DVVLWTAMMNGYVQFNRFDEALELFRCMQTAGIRP, DNFVLVSLLTGCAQTGALEQGKWIHGYINENRVTV, DKVVGTALVDMYAKCGCIETALEVFYEIKER, DTASWTSLIYGLAMNGMSGRALDLYYEMENVGVRL, DAITFVAVLTACNHGGFVAEGRKIFHSMTERHNVQP, and KSEHCSCLIDLLCRAGLLDEAEELIDKMRGESDET. The segment at 453–528 is type E motif; sequence VYCSLLSAAR…FPGCSSIEID (76 aa). Positions 529–561 are type E(+) motif; that stretch reads GVGHEFIVGDDLLSHPKMDEINSMLHQTTNLML.

The protein belongs to the PPR family. PCMP-E subfamily.

This is Pentatricopeptide repeat-containing protein At1g31430 (PCMP-E55) from Arabidopsis thaliana (Mouse-ear cress).